Consider the following 218-residue polypeptide: GTP cyclohydrolase 1 (218 aa).

Positions 107, 110, and 178 each coordinate Zn(2+).

Belongs to the GTP cyclohydrolase I family. As to quaternary structure, homomer.

The catalysed reaction is GTP + H2O = 7,8-dihydroneopterin 3'-triphosphate + formate + H(+). Its pathway is cofactor biosynthesis; 7,8-dihydroneopterin triphosphate biosynthesis; 7,8-dihydroneopterin triphosphate from GTP: step 1/1. This is GTP cyclohydrolase 1 from Azorhizobium caulinodans (strain ATCC 43989 / DSM 5975 / JCM 20966 / LMG 6465 / NBRC 14845 / NCIMB 13405 / ORS 571).